Reading from the N-terminus, the 322-residue chain is tRNA dimethylallyltransferase (322 aa).

Position 19–26 (19–26 (GPTASGKT)) interacts with ATP. Substrate is bound at residue 21-26 (TASGKT). Interaction with substrate tRNA regions lie at residues 44–47 (DSAL), 168–172 (QRIQR), and 255–260 (RCVGYR).

This sequence belongs to the IPP transferase family. Monomer. It depends on Mg(2+) as a cofactor.

It catalyses the reaction adenosine(37) in tRNA + dimethylallyl diphosphate = N(6)-dimethylallyladenosine(37) in tRNA + diphosphate. Functionally, catalyzes the transfer of a dimethylallyl group onto the adenine at position 37 in tRNAs that read codons beginning with uridine, leading to the formation of N6-(dimethylallyl)adenosine (i(6)A). In Cupriavidus taiwanensis (strain DSM 17343 / BCRC 17206 / CCUG 44338 / CIP 107171 / LMG 19424 / R1) (Ralstonia taiwanensis (strain LMG 19424)), this protein is tRNA dimethylallyltransferase.